The primary structure comprises 150 residues: Large ribosomal subunit protein uL11 (150 aa).

Belongs to the universal ribosomal protein uL11 family. In terms of assembly, part of the ribosomal stalk of the 50S ribosomal subunit. Interacts with L10 and the large rRNA to form the base of the stalk. L10 forms an elongated spine to which L12 dimers bind in a sequential fashion forming a multimeric L10(L12)X complex. In terms of processing, one or more lysine residues are methylated.

Functionally, forms part of the ribosomal stalk which helps the ribosome interact with GTP-bound translation factors. The protein is Large ribosomal subunit protein uL11 of Cereibacter sphaeroides (strain ATCC 17025 / ATH 2.4.3) (Rhodobacter sphaeroides).